A 70-amino-acid polypeptide reads, in one-letter code: Eglin C (70 aa).

It belongs to the protease inhibitor I13 (potato type I serine protease inhibitor) family.

Its function is as follows. Inhibits both elastase and cathepsin G. The chain is Eglin C from Hirudo medicinalis (Medicinal leech).